Here is an 891-residue protein sequence, read N- to C-terminus: Bifunctional aldehyde-alcohol dehydrogenase AdhE (891 aa).

An aldehyde dehydrogenase region spans residues 2–440; the sequence is AVTNVAELNA…ENVGPKHLIN (439 aa). Residues 110–115, Gly195, and Gly213 contribute to the NAD(+) site; that span reads IVPTTN. Cys246 serves as the catalytic Nucleophile. Positions 335 and 419 each coordinate NAD(+). Positions 441–448 are linker; the sequence is KKTVAKRA. The segment at 449 to 891 is alcohol dehydrogenase; that stretch reads ENMLWHKLPK…KAEKKAKKSA (443 aa). NAD(+) is bound by residues Asp487, Asp519, 546-550, 597-598, Val610, Lys619, and Leu638; these read GSPMD and TT. The Fe cation site is built by Asp653, His657, His723, and His737.

This sequence in the N-terminal section; belongs to the aldehyde dehydrogenase family. In the C-terminal section; belongs to the iron-containing alcohol dehydrogenase family. As to quaternary structure, forms long filaments, called spirosomes. The cofactor is Fe(2+).

The enzyme catalyses acetaldehyde + NAD(+) + CoA = acetyl-CoA + NADH + H(+). It carries out the reaction ethanol + NAD(+) = acetaldehyde + NADH + H(+). The catalysed reaction is a primary alcohol + NAD(+) = an aldehyde + NADH + H(+). Its function is as follows. Under fermentative conditions, catalyzes the sequential NADH-dependent reduction of acetyl-CoA to acetaldehyde and then to ethanol. Plays an important role in virulence and is critical for proper regulation of virulence gene expression. The protein is Bifunctional aldehyde-alcohol dehydrogenase AdhE of Escherichia coli O157:H7.